The sequence spans 145 residues: UPF0102 protein BAV3162 (145 aa).

This sequence belongs to the UPF0102 family.

The chain is UPF0102 protein BAV3162 from Bordetella avium (strain 197N).